The primary structure comprises 139 residues: Transcription antitermination protein NusB (139 aa).

This sequence belongs to the NusB family.

In terms of biological role, involved in transcription antitermination. Required for transcription of ribosomal RNA (rRNA) genes. Binds specifically to the boxA antiterminator sequence of the ribosomal RNA (rrn) operons. In Natranaerobius thermophilus (strain ATCC BAA-1301 / DSM 18059 / JW/NM-WN-LF), this protein is Transcription antitermination protein NusB.